Consider the following 419-residue polypeptide: Hyaluronan synthase (419 aa).

The next 5 membrane-spanning stretches (helical) occupy residues 8–28, 33–53, 318–338, 345–365, and 376–396; these read LIVL…MYLF, VGIY…LSFL, IVAL…VAIG, AIQL…IVAL, and PASF…LQPL.

Belongs to the NodC/HAS family. Requires Mg(2+) as cofactor.

The protein localises to the cell membrane. It carries out the reaction [hyaluronan](n) + UDP-N-acetyl-alpha-D-glucosamine = N-acetyl-beta-D-glucosaminyl-(1-&gt;4)-[hyaluronan](n) + UDP + H(+). The enzyme catalyses N-acetyl-beta-D-glucosaminyl-(1-&gt;4)-[hyaluronan](n) + UDP-alpha-D-glucuronate = [hyaluronan](n+1) + UDP + H(+). It participates in glycan biosynthesis; hyaluronan biosynthesis. Functionally, glycosaminoglycan synthesis. The hyaluronic acid capsule is involved in the pathogenicity of group A Streptococci; it may be the major virulence determinant. The sequence is that of Hyaluronan synthase (hasA) from Streptococcus pyogenes serotype M18 (strain MGAS8232).